An 84-amino-acid chain; its full sequence is Small ribosomal subunit protein uS17 (84 aa).

It belongs to the universal ribosomal protein uS17 family. In terms of assembly, part of the 30S ribosomal subunit.

Functionally, one of the primary rRNA binding proteins, it binds specifically to the 5'-end of 16S ribosomal RNA. This Clostridium perfringens (strain SM101 / Type A) protein is Small ribosomal subunit protein uS17.